A 201-amino-acid polypeptide reads, in one-letter code: 3-isopropylmalate dehydratase small subunit (201 aa).

It belongs to the LeuD family. LeuD type 1 subfamily. Heterodimer of LeuC and LeuD.

The enzyme catalyses (2R,3S)-3-isopropylmalate = (2S)-2-isopropylmalate. Its pathway is amino-acid biosynthesis; L-leucine biosynthesis; L-leucine from 3-methyl-2-oxobutanoate: step 2/4. Catalyzes the isomerization between 2-isopropylmalate and 3-isopropylmalate, via the formation of 2-isopropylmaleate. This is 3-isopropylmalate dehydratase small subunit from Escherichia coli O157:H7.